We begin with the raw amino-acid sequence, 299 residues long: ATP phosphoribosyltransferase (299 aa).

Belongs to the ATP phosphoribosyltransferase family. Long subfamily. Equilibrium between an active dimeric form, an inactive hexameric form and higher aggregates. Interconversion between the various forms is largely reversible and is influenced by the natural substrates and inhibitors of the enzyme. Mg(2+) serves as cofactor.

The protein localises to the cytoplasm. The enzyme catalyses 1-(5-phospho-beta-D-ribosyl)-ATP + diphosphate = 5-phospho-alpha-D-ribose 1-diphosphate + ATP. It participates in amino-acid biosynthesis; L-histidine biosynthesis; L-histidine from 5-phospho-alpha-D-ribose 1-diphosphate: step 1/9. With respect to regulation, feedback inhibited by histidine. In terms of biological role, catalyzes the condensation of ATP and 5-phosphoribose 1-diphosphate to form N'-(5'-phosphoribosyl)-ATP (PR-ATP). Has a crucial role in the pathway because the rate of histidine biosynthesis seems to be controlled primarily by regulation of HisG enzymatic activity. The sequence is that of ATP phosphoribosyltransferase from Buchnera aphidicola subsp. Diuraphis noxia.